A 411-amino-acid polypeptide reads, in one-letter code: Creatinase (411 aa).

Residue His240 is part of the active site.

It belongs to the peptidase M24 family. Creatinase subfamily. Homodimer.

It catalyses the reaction creatine + H2O = sarcosine + urea. This chain is Creatinase, found in Bacillus sp. (strain B-0618).